A 748-amino-acid chain; its full sequence is Cytosolic phospholipase A2 (748 aa).

The tract at residues 1–178 (MSFIDPYQHI…MRKLLGPKKS (178 aa)) is phospholipid binding. Position 2 is a phosphoserine (S2). Residues 6-122 (PYQHIIVEHQ…KVGEKKEVPF (117 aa)) form the C2 domain. Positions 40, 41, 43, 65, 93, 94, and 95 each coordinate Ca(2+). Positions 138 to 739 (VCSSPDLRFS…SNVEARRFFN (602 aa)) constitute a PLA2c domain. S228 (nucleophile) is an active-site residue. The residue at position 268 (T268) is a Phosphothreonine. The tract at residues 428-458 (HIVSNDSSDSDDESQEPKGTEGEDAEREYQN) is disordered. Residues S434, S435, and S437 each carry the phosphoserine modification. Residues 442–458 (QEPKGTEGEDAEREYQN) show a composition bias toward basic and acidic residues. A Phosphoserine; by MAPK modification is found at S505. S514 is subject to Phosphoserine. K540 is covalently cross-linked (Glycyl lysine isopeptide (Lys-Gly) (interchain with G-Cter in SUMO2)). D548 (proton acceptor) is an active-site residue. Residue K605 forms a Glycyl lysine isopeptide (Lys-Gly) (interchain with G-Cter in SUMO2) linkage. S726 and S728 each carry phosphoserine.

Interacts with KAT5. Post-translationally, phosphorylated at both Ser-505 and Ser-726 in response to mitogenic stimuli.

It is found in the cytoplasm. It localises to the golgi apparatus membrane. The protein localises to the nucleus envelope. It catalyses the reaction a 1,2-diacyl-sn-glycero-3-phosphocholine + H2O = a 1-acyl-sn-glycero-3-phosphocholine + a fatty acid + H(+). The enzyme catalyses a 1-O-alkyl-2-acyl-sn-glycero-3-phosphocholine + H2O = a 1-O-alkyl-sn-glycero-3-phosphocholine + a fatty acid + H(+). The catalysed reaction is a 1-acyl-sn-glycero-3-phosphocholine + H2O = sn-glycerol 3-phosphocholine + a fatty acid + H(+). It carries out the reaction 1-hexadecanoyl-2-(5Z,8Z,11Z,14Z-eicosatetraenoyl)-sn-glycero-3-phosphocholine + H2O = 1-hexadecanoyl-sn-glycero-3-phosphocholine + (5Z,8Z,11Z,14Z)-eicosatetraenoate + H(+). It catalyses the reaction 1,2-di-(5Z,8Z,11Z,14Z-eicosatetraenoyl)-sn-glycero-3-phosphocholine + H2O = 1-(5Z,8Z,11Z,14Z-eicosatetraenoyl)-sn-glycero-3-phosphocholine + (5Z,8Z,11Z,14Z)-eicosatetraenoate + H(+). The enzyme catalyses 1-octadecanoyl-2-(5Z,8Z,11Z,14Z-eicosatetraenoyl)-sn-glycero-3-phosphocholine + H2O = 1-octadecanoyl-sn-glycero-3-phosphocholine + (5Z,8Z,11Z,14Z)-eicosatetraenoate + H(+). The catalysed reaction is 1-hexadecanoyl-2-(9Z,12Z-octadecadienoyl)-sn-glycero-3-phosphocholine + H2O = (9Z,12Z)-octadecadienoate + 1-hexadecanoyl-sn-glycero-3-phosphocholine + H(+). It carries out the reaction 1-octadecanoyl-2-(9Z,12Z,15Z-octadecatrienoyl)-sn-glycero-3-phosphocholine + H2O = (9Z,12Z,15Z)-octadecatrienoate + 1-octadecanoyl-sn-glycero-3-phosphocholine + H(+). It catalyses the reaction 1-(5Z,8Z,11Z,14Z-eicosatetraenoyl)-2-hexadecanoyl-sn-glycero-3-phosphocholine + H2O = 1-(5Z,8Z,11Z,14Z-eicosatetraenoyl)-sn-glycero-3-phosphocholine + hexadecanoate + H(+). The enzyme catalyses 1-O-hexadecyl-2-(5Z,8Z,11Z,14Z)-eicosatetraenoyl-sn-glycero-3-phosphocholine + H2O = 1-O-hexadecyl-sn-glycero-3-phosphocholine + (5Z,8Z,11Z,14Z)-eicosatetraenoate + H(+). The catalysed reaction is 1,2-di-(9Z-octadecenoyl)-sn-glycero-3-phospho-(1'-sn-glycerol) + H2O = 1-(9Z-octadecenoyl)-sn-glycero-3-phospho-(1'-sn-glycerol) + (9Z)-octadecenoate + H(+). It carries out the reaction 1-octadecanoyl-2-(5Z,8Z,11Z,14Z-eicosatetraenoyl)-sn-glycero-3-phosphate + H2O = 1-octadecanoyl-sn-glycero-3-phosphate + (5Z,8Z,11Z,14Z)-eicosatetraenoate + H(+). It catalyses the reaction 1-hexadecanoyl-sn-glycero-3-phosphocholine + H2O = sn-glycerol 3-phosphocholine + hexadecanoate + H(+). The enzyme catalyses 2-(prostaglandin E2)-sn-glycero-3-phosphoethanolamine + H2O = sn-glycero-3-phosphoethanolamine + prostaglandin E2 + H(+). The catalysed reaction is 2-[(15S)-hydroxy-(5Z,8Z,11Z,13E)-eicosatetraenoyl]-sn-glycero-3-phosphocholine + H2O = (15S)-hydroxy-(5Z,8Z,11Z,13E)-eicosatetraenoate + sn-glycerol 3-phosphocholine + H(+). It carries out the reaction 2-[(15R)-hydroxy-(5Z,8Z,11Z,13E)-eicosatetraenoyl]-sn-glycero-3-phosphocholine + H2O = (15R)-hydroxy-(5Z,8Z,11Z,13E)-eicosatetraenoate + sn-glycerol 3-phosphocholine + H(+). It catalyses the reaction 2-(prostaglandin E2)-sn-glycero-3-phosphocholine + H2O = prostaglandin E2 + sn-glycerol 3-phosphocholine + H(+). The enzyme catalyses 2-[(11R)-hydroxy-(5Z,8Z,12E,14Z)-eicosatetraenoyl]-sn-glycero-3-phosphocholine + H2O = (11R)-hydroxy-(5Z,8Z,12E,14Z)-eicosatetraenoate + sn-glycerol 3-phosphocholine + H(+). The catalysed reaction is 1-(5Z,8Z,11Z,14Z-eicosatetraenoyl)-2-O-hexadecyl-sn-glycero-3-phosphocholine + H2O = 2-O-hexadecyl-sn-glycero-3-phosphocholine + (5Z,8Z,11Z,14Z)-eicosatetraenoate + H(+). It carries out the reaction 1-octadecanoyl-2-(5Z,8Z,11Z,14Z-eicosatetraenoyl)-sn-glycero-3-phosphocholine + glycerol = 1-(5Z,8Z,11Z,14Z-eicosatetraenoyl)-glycerol + 1-octadecanoyl-sn-glycero-3-phosphocholine. It catalyses the reaction 1-octadecanoyl-2-(9Z,12Z,15Z-octadecatrienoyl)-sn-glycero-3-phosphocholine + glycerol = 1-(9Z,12Z,15Z-octadecatrienoyl)-glycerol + 1-octadecanoyl-sn-glycero-3-phosphocholine. The protein operates within membrane lipid metabolism; glycerophospholipid metabolism. It functions in the pathway lipid metabolism; arachidonate metabolism. It participates in lipid metabolism; prostaglandin biosynthesis. Its pathway is lipid metabolism; leukotriene B4 biosynthesis. With respect to regulation, activated by cytosolic calcium, which is necessary for binding to membrane lipids. Activated by phosphorylation in response to mitogenic stimuli. In terms of biological role, has primarily calcium-dependent phospholipase and lysophospholipase activities, with a major role in membrane lipid remodeling and biosynthesis of lipid mediators of the inflammatory response. Plays an important role in embryo implantation and parturition through its ability to trigger prostanoid production. Preferentially hydrolyzes the ester bond of the fatty acyl group attached at sn-2 position of phospholipids (phospholipase A2 activity). Selectively hydrolyzes sn-2 arachidonoyl group from membrane phospholipids, providing the precursor for eicosanoid biosynthesis via the cyclooxygenase pathway. In an alternative pathway of eicosanoid biosynthesis, hydrolyzes sn-2 fatty acyl chain of eicosanoid lysophopholipids to release free bioactive eicosanoids. Hydrolyzes the ester bond of the fatty acyl group attached at sn-1 position of phospholipids (phospholipase A1 activity) only if an ether linkage rather than an ester linkage is present at the sn-2 position. This hydrolysis is not stereospecific. Has calcium-independent phospholipase A2 and lysophospholipase activities in the presence of phosphoinositides. Has O-acyltransferase activity. Catalyzes the transfer of fatty acyl chains from phospholipids to a primary hydroxyl group of glycerol (sn-1 or sn-3), potentially contributing to monoacylglycerol synthesis. The protein is Cytosolic phospholipase A2 (PLA2G4A) of Oryctolagus cuniculus (Rabbit).